Here is a 138-residue protein sequence, read N- to C-terminus: Small ribosomal subunit protein uS12m (138 aa).

A mitochondrion-targeting transit peptide spans 1-29 (MSWSGLLHGLNTSLTCGPALVPRLWATCS). Residues 36–56 (MHRLGPPKRPPRKLGPTEGRP) are disordered.

It belongs to the universal ribosomal protein uS12 family. Component of the mitochondrial small ribosomal subunit (mt-SSU). Mature mammalian 55S mitochondrial ribosomes consist of a small (28S) and a large (39S) subunit. The 28S small subunit contains a 12S ribosomal RNA (12S mt-rRNA) and 30 different proteins. The 39S large subunit contains a 16S rRNA (16S mt-rRNA), a copy of mitochondrial valine transfer RNA (mt-tRNA(Val)), which plays an integral structural role, and 52 different proteins.

Its subcellular location is the mitochondrion. The sequence is that of Small ribosomal subunit protein uS12m (MRPS12) from Homo sapiens (Human).